Reading from the N-terminus, the 1704-residue chain is Phospholipid-transporting ATPase ABCA3 (1704 aa).

A glycan (N-linked (GlcNAc...) asparagine) is linked at N14. A helical transmembrane segment spans residues 22 to 42 (VLVTVLELFLPLLFSGILIWL). N-linked (GlcNAc...) asparagine glycans are attached at residues N53, N124, and N140. Transmembrane regions (helical) follow at residues 261-283 (YQLPLLLLLSFTYTALTIARAVV), 307-327 (AWFLLFFLFLLIAASFMTLLF), 344-364 (SLVLAFLLCFAISTISFSFMV), 373-393 (MAAAFGGFLYFFTYIPYFFVA), 405-425 (LCSCLLSNVAMAMGAQLIGKF), and 447-467 (FCFGQVLGMLLLDSVLYGLVT). Positions 530-763 (IKIKHLSKVF…YGAGYHMTLV (234 aa)) constitute an ABC transporter 1 domain. An ATP-binding site is contributed by 566–573 (GHNGAGKT). 2 N-linked (GlcNAc...) asparagine glycosylation sites follow: N620 and N783. The next 7 membrane-spanning stretches (helical) occupy residues 925–945 (MVAAQVLVPLTCVTLALLAIN), 1100–1120 (IALNLLFAMAFLASTFSILAV), 1144–1164 (SALLWDLISFLIPSLLLLVVF), 1183–1203 (LLLLLYGWAIIPLMYLMNFFF), 1213–1233 (LTIFNILSGIATFLMVTIMRI), 1245–1265 (LDHVFLVLPNHCLGMAVSSFY), and 1306–1326 (FVASMAASGCAYLILLFLIET). Residues 1381–1614 (LIIKELSKVY…FGSGYSLRAK (234 aa)) enclose the ABC transporter 2 domain. 1416–1423 (GFNGAGKT) provides a ligand contact to ATP.

It belongs to the ABC transporter superfamily. ABCA family. As to quaternary structure, homooligomer; disulfide-linked. In terms of processing, N-glycosylated. Localization at intracellular vesicles is accompanied by processing of oligosaccharide from high mannose type to complex type. N-linked glycosylation at Asn-124 and Asn-140 is required for stability and efficient anterograde trafficking and prevents from proteasomal degradation. Post-translationally, proteolytically cleaved by CTSL and to a lower extent by CTSB within multivesicular bodies (MVB) and lamellar bodies (LB) leading to a mature form of 150 kDa. In terms of tissue distribution, expressed in brain, pancreas, skeletal muscle and heart. Highly expressed in the lung in an AT2-cell-specific manner. Weakly expressed in placenta, kidney and liver. Also expressed in medullary thyroid carcinoma cells (MTC) and in C-cell carcinoma.

The protein resides in the endosome. Its subcellular location is the multivesicular body membrane. It localises to the cytoplasmic vesicle membrane. The protein localises to the late endosome membrane. It is found in the lysosome membrane. The enzyme catalyses ATP + H2O + xenobioticSide 1 = ADP + phosphate + xenobioticSide 2.. The catalysed reaction is a 1,2-diacyl-sn-glycero-3-phosphocholine(in) + ATP + H2O = a 1,2-diacyl-sn-glycero-3-phosphocholine(out) + ADP + phosphate + H(+). It carries out the reaction ATP + H2O + phospholipidSide 1 = ADP + phosphate + phospholipidSide 2.. It catalyses the reaction 1,2-dihexadecanoyl-sn-glycero-3-phosphocholine(in) + ATP + H2O = 1,2-dihexadecanoyl-sn-glycero-3-phosphocholine(out) + ADP + phosphate + H(+). The enzyme catalyses cholesterol(in) + ATP + H2O = cholesterol(out) + ADP + phosphate + H(+). The catalysed reaction is a 1,2-diacyl-sn-glycero-3-phospho-(1'-sn-glycerol)(in) + ATP + H2O = a 1,2-diacyl-sn-glycero-3-phospho-(1'-sn-glycerol)(out) + ADP + phosphate + H(+). The ATP-dependent phosphatidylcholine transport is competitively inhibited by miltefosine. Catalyzes the ATP-dependent transport of phospholipids such as phosphatidylcholine and phosphoglycerol from the cytoplasm into the lumen side of lamellar bodies, in turn participates in the lamellar bodies biogenesis and homeostasis of pulmonary surfactant. Transports preferentially phosphatidylcholine containing short acyl chains. In addition plays a role as an efflux transporter of miltefosine across macrophage membranes and free cholesterol (FC) through intralumenal vesicles by removing FC from the cell as a component of surfactant and protects cells from free cholesterol toxicity. This chain is Phospholipid-transporting ATPase ABCA3, found in Homo sapiens (Human).